A 513-amino-acid polypeptide reads, in one-letter code: Ribonuclease Y (513 aa).

The chain crosses the membrane as a helical span at residues 3–23 (IGTLLLFTFLGLVAGATAVWL). Positions 77–96 (LQSVESKLKSREQTLNQRQE) are disordered. The segment covering 82–96 (SKLKSREQTLNQRQE) has biased composition (basic and acidic residues). Positions 203–263 (SVTVFHIESD…VRREIARLAL (61 aa)) constitute a KH domain. The 94-residue stretch at 329–422 (LLQHSRETAN…VQVCDAISGA (94 aa)) folds into the HD domain.

This sequence belongs to the RNase Y family.

It is found in the cell membrane. In terms of biological role, endoribonuclease that initiates mRNA decay. The polypeptide is Ribonuclease Y (Porphyromonas gingivalis (strain ATCC BAA-308 / W83)).